Consider the following 254-residue polypeptide: Phosphate import ATP-binding protein PstB (254 aa).

Positions 9–249 constitute an ABC transporter domain; sequence MSVKDLDLFY…PVDKRTEDYI (241 aa). Position 41–48 (41–48) interacts with ATP; it reads GPSGCGKS.

This sequence belongs to the ABC transporter superfamily. Phosphate importer (TC 3.A.1.7) family. The complex is composed of two ATP-binding proteins (PstB), two transmembrane proteins (PstC and PstA) and a solute-binding protein (PstS).

It is found in the cell membrane. It catalyses the reaction phosphate(out) + ATP + H2O = ADP + 2 phosphate(in) + H(+). Functionally, part of the ABC transporter complex PstSACB involved in phosphate import. Responsible for energy coupling to the transport system. The protein is Phosphate import ATP-binding protein PstB of Clostridioides difficile (strain 630) (Peptoclostridium difficile).